Here is a 201-residue protein sequence, read N- to C-terminus: Kunitz type trypsin inhibitor 104 (201 aa).

An N-terminal signal peptide occupies residues 1-24 (MSTRSLTIFILAHVWLLMATTSIA). Intrachain disulfides connect cysteine 63–cysteine 110, cysteine 161–cysteine 173, and cysteine 166–cysteine 169.

This sequence belongs to the protease inhibitor I3 (leguminous Kunitz-type inhibitor) family. As to quaternary structure, interacts with CP.

It is found in the secreted. The protein localises to the extracellular space. It localises to the apoplast. Functionally, protease inhibitor involved in the control of mycorrhiza establishment and arbuscule development during root colonization by arbuscular mycorrhizal (AM) fungi (e.g. Rhizophagus irregularis). This chain is Kunitz type trypsin inhibitor 104, found in Medicago truncatula (Barrel medic).